An 828-amino-acid polypeptide reads, in one-letter code: DNA gyrase subunit A (828 aa).

A Topo IIA-type catalytic domain is found at 32–497 (LPDVRDGLKP…EVLSLEDEDL (466 aa)). Tyr120 (O-(5'-phospho-DNA)-tyrosine intermediate) is an active-site residue. Positions 524–530 (QKRGGRG) match the GyrA-box motif.

The protein belongs to the type II topoisomerase GyrA/ParC subunit family. As to quaternary structure, heterotetramer, composed of two GyrA and two GyrB chains. In the heterotetramer, GyrA contains the active site tyrosine that forms a transient covalent intermediate with DNA, while GyrB binds cofactors and catalyzes ATP hydrolysis.

It is found in the cytoplasm. It catalyses the reaction ATP-dependent breakage, passage and rejoining of double-stranded DNA.. Functionally, a type II topoisomerase that negatively supercoils closed circular double-stranded (ds) DNA in an ATP-dependent manner to modulate DNA topology and maintain chromosomes in an underwound state. Negative supercoiling favors strand separation, and DNA replication, transcription, recombination and repair, all of which involve strand separation. Also able to catalyze the interconversion of other topological isomers of dsDNA rings, including catenanes and knotted rings. Type II topoisomerases break and join 2 DNA strands simultaneously in an ATP-dependent manner. In Streptococcus pyogenes serotype M3 (strain ATCC BAA-595 / MGAS315), this protein is DNA gyrase subunit A.